A 380-amino-acid chain; its full sequence is Alpha-N-acetylneuraminate alpha-2,8-sialyltransferase ST8SIA3 (380 aa).

Topologically, residues 1–9 are cytoplasmic; that stretch reads MRNCKMARV. A helical; Signal-anchor for type II membrane protein membrane pass occupies residues 10 to 33; sequence ASVLGLVMLSVALLILSLISYVSL. Over 34–380 the chain is Lumenal; it reads KKENIFTTPK…LTKLTLSHCA (347 aa). Asn-93, Asn-113, and Asn-160 each carry an N-linked (GlcNAc...) asparagine glycan. 2 disulfide bridges follow: Cys-162-Cys-313 and Cys-176-Cys-379. The CMP-N-acetyl-beta-neuraminate site is built by Asn-167 and Asn-190. Asn-206 carries an N-linked (GlcNAc...) asparagine glycan. Residues Ser-300, Thr-301, Gly-302, Trp-322, Tyr-336, and His-337 each contribute to the CMP-N-acetyl-beta-neuraminate site. Catalysis depends on His-354, which acts as the Proton donor/acceptor.

The protein belongs to the glycosyltransferase 29 family. As to quaternary structure, homodimer. In terms of processing, autopolysialylated. Expressed in fetal and adult brain and fetal liver.

Its subcellular location is the golgi apparatus membrane. It catalyses the reaction [N-acetyl-alpha-D-neuraminosyl-(2-&gt;8)](n) + CMP-N-acetyl-beta-neuraminate = [N-acetyl-alpha-D-neuraminosyl-(2-&gt;8)](n+1) + CMP + H(+). The catalysed reaction is alpha-Neu5Ac-(2-&gt;3)-beta-D-Gal-(1-&gt;4)-6S-D-GlcNAc + CMP-N-acetyl-beta-neuraminate = alpha-Neu5Ac-(2-&gt;8)-alpha-Neu5Ac-(2-&gt;3)-beta-D-Gal-(1-&gt;4)-6S-D-GlcNAc + CMP + H(+). The enzyme catalyses a ganglioside GM3 (d18:1(4E)) + CMP-N-acetyl-beta-neuraminate = a ganglioside GD3 (d18:1(4E)) + CMP + H(+). It carries out the reaction a ganglioside GM3 + CMP-N-acetyl-beta-neuraminate = a ganglioside GD3 + CMP + H(+). It catalyses the reaction an N-acetyl-alpha-neuraminyl-(2-&gt;3)-beta-D-galactosyl derivative + CMP-N-acetyl-beta-neuraminate = an N-acetyl-alpha-neuraminyl-(2-&gt;8)-N-acetyl-alpha-neuraminyl-(2-&gt;3)-beta-D-galactosyl derivative + CMP + H(+). The catalysed reaction is an N-acetyl-alpha-neuraminyl-(2-&gt;3)-beta-D-galactosyl-(1-&gt;4)-N-acetyl-beta-D-glucosaminyl derivative + CMP-N-acetyl-beta-neuraminate = an alpha-Neu5Ac-(2-&gt;8)-alpha-Neu5Ac-(2-&gt;3)-beta-D-Gal-(1-&gt;4)-beta-D-GlcNAc derivative + CMP + H(+). The protein operates within protein modification; protein glycosylation. Functionally, catalyzes the transfer of sialic acid from a CMP-linked sialic acid donor onto a terminal alpha-2,3-, alpha-2,6-, or alpha-2,8-linked sialic acid of an acceptor, such as N-linked oligosaccharides of glycoproteins and glycolipids through alpha-2,8-linkages. Forms oligosialic and polysialic acid on various sialylated N-acetyllactosamine oligosaccharides of glycoproteins, including FETUB N-glycans, a2-HS-glycoprotein (AHSG) and alpha 2,3-sialylated glycosphingolipids, such as alpha 2,3-sialylparagloboside and ganglioside GM3 and to a lesser extent NCAM1 N-glycans. However, it is much more specific to N-linked oligosaccharides of glycoproteins than glycosphingolipids. 2,3-sialylparagloboside serves as the best acceptor substrate among the glycolipids. alpha-Neu5Ac-(2-&gt;8)-alpha-Neu5Ac-(2-&gt;3)-beta-D-Gal-(1-&gt;4)-6S-D-GlcNAc and monosialyl and disialyl N-acetyllactosamines are the best acceptor substrates among glycoproteins. May plays critical role in the striatum by mediating the formation of disialylated and trisialylated terminal glycotopes on N- and O-glycans of specific striatal proteins, regulating their distribution in lipid rafts, affecting their interaction with other binding partners, and subsequently modulating striatal functions. In Homo sapiens (Human), this protein is Alpha-N-acetylneuraminate alpha-2,8-sialyltransferase ST8SIA3.